A 308-amino-acid chain; its full sequence is Ribosomal protein L11 methyltransferase (308 aa).

The S-adenosyl-L-methionine site is built by Thr148, Gly169, Asp191, and Asn239.

Belongs to the methyltransferase superfamily. PrmA family.

It localises to the cytoplasm. The enzyme catalyses L-lysyl-[protein] + 3 S-adenosyl-L-methionine = N(6),N(6),N(6)-trimethyl-L-lysyl-[protein] + 3 S-adenosyl-L-homocysteine + 3 H(+). In terms of biological role, methylates ribosomal protein L11. This is Ribosomal protein L11 methyltransferase from Psychrobacter arcticus (strain DSM 17307 / VKM B-2377 / 273-4).